A 323-amino-acid polypeptide reads, in one-letter code: Fructokinase-1 (323 aa).

This sequence belongs to the carbohydrate kinase PfkB family. As to expression, expressed in root, endosperm and leaf tissues.

It carries out the reaction D-fructose + ATP = D-fructose 6-phosphate + ADP + H(+). Its pathway is glycan biosynthesis; starch biosynthesis. Its activity is regulated as follows. Completely inhibited at 50 mM ATP, but not inhibited at high fructose concentration. Functionally, fructokinase that may play an important role in maintaining the flux of carbon towards starch formation. May also be involved in a sugar-sensing pathway. The protein is Fructokinase-1 of Oryza sativa subsp. japonica (Rice).